The sequence spans 564 residues: Adenine deaminase (564 aa).

The protein belongs to the metallo-dependent hydrolases superfamily. Adenine deaminase family. It depends on Mn(2+) as a cofactor.

The catalysed reaction is adenine + H2O + H(+) = hypoxanthine + NH4(+). In Deinococcus geothermalis (strain DSM 11300 / CIP 105573 / AG-3a), this protein is Adenine deaminase.